The primary structure comprises 74 residues: Anaphase-promoting complex subunit 13 (74 aa).

The disordered stretch occupies residues 33–53 (LNELPDPEQDNGGTTESVKEQ).

This sequence belongs to the APC13 family. The mammalian APC/C is composed at least of 14 distinct subunits ANAPC1, ANAPC2, CDC27/APC3, ANAPC4, ANAPC5, CDC16/APC6, ANAPC7, CDC23/APC8, ANAPC10, ANAPC11, CDC26/APC12, ANAPC13, ANAPC15 and ANAPC16 that assemble into a complex of at least 19 chains with a combined molecular mass of around 1.2 MDa; APC/C interacts with FZR1 and FBXO5.

The protein resides in the nucleus. It participates in protein modification; protein ubiquitination. Component of the anaphase promoting complex/cyclosome (APC/C), a cell cycle-regulated E3 ubiquitin ligase that controls progression through mitosis and the G1 phase of the cell cycle. The APC/C complex acts by mediating ubiquitination and subsequent degradation of target proteins: it mainly mediates the formation of 'Lys-11'-linked polyubiquitin chains and, to a lower extent, the formation of 'Lys-48'- and 'Lys-63'-linked polyubiquitin chains. The APC/C complex catalyzes assembly of branched 'Lys-11'-/'Lys-48'-linked branched ubiquitin chains on target proteins. This Pongo abelii (Sumatran orangutan) protein is Anaphase-promoting complex subunit 13 (ANAPC13).